We begin with the raw amino-acid sequence, 157 residues long: UPF0262 protein Rleg2_0240 (157 aa).

The protein belongs to the UPF0262 family.

The protein is UPF0262 protein Rleg2_0240 of Rhizobium leguminosarum bv. trifolii (strain WSM2304).